Here is a 119-residue protein sequence, read N- to C-terminus: MKQVNMNRNERRQMRHKRVIKKIRRIDNDRPVMIVVKSNSHISAQVWDFNQNKIIASSSSVSLDLVNGNKENAAVVGTDIANKLLKMKIDEITFDHGGSKYHGRIAALADAARKAGLKF.

It belongs to the universal ribosomal protein uL18 family. As to quaternary structure, part of the 50S ribosomal subunit; part of the 5S rRNA/L5/L18/L25 subcomplex. Contacts the 5S and 23S rRNAs.

In terms of biological role, this is one of the proteins that bind and probably mediate the attachment of the 5S RNA into the large ribosomal subunit, where it forms part of the central protuberance. The sequence is that of Large ribosomal subunit protein uL18 from Mycoplasmoides gallisepticum (strain R(low / passage 15 / clone 2)) (Mycoplasma gallisepticum).